The chain runs to 210 residues: Vacuolar protein sorting-associated protein 2 homolog 3 (210 aa).

Positions 1–23 (MNIFTKKPNPREVLRESKREMTQ) are disordered. Positions 9-23 (NPREVLRESKREMTQ) are enriched in basic and acidic residues. Residues 28–84 (IEKEIGSLQSEEKKLVLEIKRTAKSGNEGATKILARQLIRLRQQIANLQGSRAQMRG) are a coiled coil. The segment at 178 to 200 (LSSAPKGKIGGKKAEDVGSSGID) is disordered.

Belongs to the SNF7 family. In terms of assembly, component of the endosomal sorting required for transport complex III (ESCRT-III), composed at least of VPS2, VPS20, VPS24 and VPS32.

It localises to the endosome. Functionally, component of the ESCRT-III complex, which is required for multivesicular bodies (MVBs) formation and sorting of endosomal cargo proteins into MVBs. The ESCRT-III complex is probably involved in the concentration of MVB cargo. This Arabidopsis thaliana (Mouse-ear cress) protein is Vacuolar protein sorting-associated protein 2 homolog 3 (VPS2.3).